The following is a 544-amino-acid chain: Ribosomal oxygenase 1 (544 aa).

The interval methionine 1 to methionine 78 is disordered. Over residues serine 10–lysine 19 the composition is skewed to polar residues. Over residues proline 42–lysine 53 the composition is skewed to basic residues. Residues serine 63–methionine 78 show a composition bias toward basic and acidic residues. In terms of domain architecture, JmjC spans cysteine 197–alanine 342. Fe cation-binding residues include histidine 243, aspartate 245, and histidine 308.

This sequence belongs to the ROX family. NO66 subfamily. The cofactor is Fe(2+).

The protein localises to the nucleus. It localises to the nucleolus. Its subcellular location is the nucleoplasm. It carries out the reaction N(6),N(6)-dimethyl-L-lysyl(36)-[histone H3] + 2 2-oxoglutarate + 2 O2 = L-lysyl(36)-[histone H3] + 2 formaldehyde + 2 succinate + 2 CO2. The enzyme catalyses N(6)-methyl-L-lysyl-[protein] + 2-oxoglutarate + O2 = L-lysyl-[protein] + formaldehyde + succinate + CO2. It catalyses the reaction L-histidyl-[protein] + 2-oxoglutarate + O2 = (3S)-3-hydroxy-L-histidyl-[protein] + succinate + CO2. Oxygenase that can act as both a histone lysine demethylase and a ribosomal histidine hydroxylase. Specifically demethylates 'Lys-4' (H3K4me) and 'Lys-36' (H3K36me) of histone H3, thereby playing a central role in histone code. Preferentially demethylates trimethylated H3 'Lys-4' (H3K4me3) and monomethylated H3 'Lys-4' (H3K4me1) residues, while it has weaker activity for dimethylated H3 'Lys-36' (H3K36me2). Also catalyzes demethylation of non-histone proteins. Also catalyzes the hydroxylation of 60S ribosomal protein L8 on 'His-216', thereby playing a role in ribosome biogenesis. This Danio rerio (Zebrafish) protein is Ribosomal oxygenase 1 (riox1).